The chain runs to 433 residues: tRNA(Ile)-lysidine synthase (433 aa).

Residue Ser27–Ser32 participates in ATP binding.

The protein belongs to the tRNA(Ile)-lysidine synthase family.

The protein resides in the cytoplasm. The catalysed reaction is cytidine(34) in tRNA(Ile2) + L-lysine + ATP = lysidine(34) in tRNA(Ile2) + AMP + diphosphate + H(+). Functionally, ligates lysine onto the cytidine present at position 34 of the AUA codon-specific tRNA(Ile) that contains the anticodon CAU, in an ATP-dependent manner. Cytidine is converted to lysidine, thus changing the amino acid specificity of the tRNA from methionine to isoleucine. The protein is tRNA(Ile)-lysidine synthase of Legionella pneumophila subsp. pneumophila (strain Philadelphia 1 / ATCC 33152 / DSM 7513).